We begin with the raw amino-acid sequence, 228 residues long: Small ribosomal subunit protein uS3 (228 aa).

Positions 39-107 (VREYLQDKLK…PVHINIEEIR (69 aa)) constitute a KH type-2 domain.

It belongs to the universal ribosomal protein uS3 family. Part of the 30S ribosomal subunit. Forms a tight complex with proteins S10 and S14.

Binds the lower part of the 30S subunit head. Binds mRNA in the 70S ribosome, positioning it for translation. The polypeptide is Small ribosomal subunit protein uS3 (Pseudomonas fluorescens (strain ATCC BAA-477 / NRRL B-23932 / Pf-5)).